We begin with the raw amino-acid sequence, 276 residues long: MIFSNYSLDKLIQNRKSKRIFIGTDTITLQKVVIKIYDDKNKSKESILRDIHIPSILNHPNIIKIKDYVEDLDSNKMYVIYPYIDNTISLRNLPVDKFDVTDLFKLYYIIDILIQVVDAISYMHDNNIVHRDIKPDNILLNDKVHLIDFDLSDQLDNPKFPVRKGTIGTPNFMAPEIWWKINQVDYKKTDIYSLGITMYYLLNKRKLPYKAKKYSELEYQIANHKPKISNSGYPELDKLIMKIIDKDPQNRPTISEIKQKLNHFKTIVDTRVNFNE.

A Protein kinase domain is found at 6–266; sequence YSLDKLIQNR…IKQKLNHFKT (261 aa). Residues 12 to 20 and Lys-35 contribute to the ATP site; that span reads IQNRKSKRI. The Proton acceptor role is filled by Asp-132.

The protein belongs to the protein kinase superfamily. Ser/Thr protein kinase family.

The enzyme catalyses L-seryl-[protein] + ATP = O-phospho-L-seryl-[protein] + ADP + H(+). It carries out the reaction L-threonyl-[protein] + ATP = O-phospho-L-threonyl-[protein] + ADP + H(+). This is Putative serine/threonine-protein kinase R436 from Acanthamoeba polyphaga (Amoeba).